Here is a 256-residue protein sequence, read N- to C-terminus: Trans-aconitate 2-methyltransferase (256 aa).

The protein belongs to the methyltransferase superfamily. Tam family.

The protein resides in the cytoplasm. The enzyme catalyses trans-aconitate + S-adenosyl-L-methionine = (E)-3-(methoxycarbonyl)pent-2-enedioate + S-adenosyl-L-homocysteine. Its function is as follows. Catalyzes the S-adenosylmethionine monomethyl esterification of trans-aconitate. In Rhizobium etli (strain ATCC 51251 / DSM 11541 / JCM 21823 / NBRC 15573 / CFN 42), this protein is Trans-aconitate 2-methyltransferase.